The primary structure comprises 127 residues: 13 kDa ribonucleoprotein-associated protein (127 aa).

The protein belongs to the eukaryotic ribosomal protein eL8 family. Component of the U3 snoRNP particle. Binds to the C'/D and B/C motifs in U3 snoRNA. Component of the 25S U4/U6.U5 tri-snRNP particle, a subcomplex of the spliceosome. Binds to the 5' stem-loop of U4 snRNA.

It is found in the nucleus. It localises to the nucleolus. Functionally, common component of the spliceosome and rRNA processing machinery. In association with the spliceosomal U4/U6.U5 tri-snRNP particle, required for splicing of pre-mRNA. In association with box C/D snoRNPs, required for processing of pre-ribosomal RNA (rRNA) and site-specific 2'-O-methylation of substrate RNAs. Essential for the accumulation and stability of U4 snRNA, U6 snRNA, and box C/D snoRNAs. The polypeptide is 13 kDa ribonucleoprotein-associated protein (SNU13) (Eremothecium gossypii (strain ATCC 10895 / CBS 109.51 / FGSC 9923 / NRRL Y-1056) (Yeast)).